Consider the following 423-residue polypeptide: MIDPKLLRNNIEAVNLALAKRGVQLDPTEWASLEVRRKELQSKTESLQAERNAGAKQVGQIKKAGGDASEIMTRMQAIGDEIKAAEVALAELQAEIEQKALSIPNLPDESVPEGKDENDNVEISKWGTPRQFDFEIKDHTDLGEWMGGLEFETATKLTGSRFSVLKGPLARLQRALTQFMLDTHTLKNGYTEAYVPYLVNADSLRGTGQLPKFEEDLFKLQGEKEYYLIPTAEVPVTNFVRDEIIDAERLPLKYAAHTPCFRSEAGSYGRDTRGLIRQHQFDKVEMVQIVKPEDSMQALEELTGHAEGILQALGLPYRKILLCGGDMGFGSTKTYDLEVWVPSQNTYREISSCSNMGDFQARRMMARYRTDQKKTELVHTLNGSGLAVGRTLLAVMENYQRADGAIEVPEVLRPYMGGATYID.

Residue 231-233 coordinates L-serine; that stretch reads TAE. An ATP-binding site is contributed by 262 to 264; sequence RSE. Glutamate 285 serves as a coordination point for L-serine. 349–352 contributes to the ATP binding site; sequence EISS. Residue serine 384 coordinates L-serine.

Belongs to the class-II aminoacyl-tRNA synthetase family. Type-1 seryl-tRNA synthetase subfamily. As to quaternary structure, homodimer. The tRNA molecule binds across the dimer.

It localises to the cytoplasm. The enzyme catalyses tRNA(Ser) + L-serine + ATP = L-seryl-tRNA(Ser) + AMP + diphosphate + H(+). The catalysed reaction is tRNA(Sec) + L-serine + ATP = L-seryl-tRNA(Sec) + AMP + diphosphate + H(+). The protein operates within aminoacyl-tRNA biosynthesis; selenocysteinyl-tRNA(Sec) biosynthesis; L-seryl-tRNA(Sec) from L-serine and tRNA(Sec): step 1/1. Catalyzes the attachment of serine to tRNA(Ser). Is also able to aminoacylate tRNA(Sec) with serine, to form the misacylated tRNA L-seryl-tRNA(Sec), which will be further converted into selenocysteinyl-tRNA(Sec). The polypeptide is Serine--tRNA ligase (Acinetobacter baylyi (strain ATCC 33305 / BD413 / ADP1)).